Reading from the N-terminus, the 162-residue chain is RNA pyrophosphohydrolase (162 aa).

The region spanning Pro-11 to Ala-155 is the Nudix hydrolase domain. Residues Gly-45 to Gly-66 carry the Nudix box motif.

This sequence belongs to the Nudix hydrolase family. RppH subfamily. The cofactor is a divalent metal cation.

In terms of biological role, accelerates the degradation of transcripts by removing pyrophosphate from the 5'-end of triphosphorylated RNA, leading to a more labile monophosphorylated state that can stimulate subsequent ribonuclease cleavage. The polypeptide is RNA pyrophosphohydrolase (Cereibacter sphaeroides (strain ATCC 17029 / ATH 2.4.9) (Rhodobacter sphaeroides)).